Here is a 406-residue protein sequence, read N- to C-terminus: Tryptophan synthase beta chain (406 aa).

Position 99 is an N6-(pyridoxal phosphate)lysine (K99).

It belongs to the TrpB family. Tetramer of two alpha and two beta chains. It depends on pyridoxal 5'-phosphate as a cofactor.

It catalyses the reaction (1S,2R)-1-C-(indol-3-yl)glycerol 3-phosphate + L-serine = D-glyceraldehyde 3-phosphate + L-tryptophan + H2O. The protein operates within amino-acid biosynthesis; L-tryptophan biosynthesis; L-tryptophan from chorismate: step 5/5. The beta subunit is responsible for the synthesis of L-tryptophan from indole and L-serine. In Brucella melitensis biotype 2 (strain ATCC 23457), this protein is Tryptophan synthase beta chain.